A 116-amino-acid polypeptide reads, in one-letter code: Tachykinin-3 (116 aa).

The first 20 residues, 1–20 (MRSAMLFAAVLALSLAWTFG), serve as a signal peptide directing secretion. The propeptide occupies 21–79 (AACEEPQEQGGRLSKDSDLSLLPPPLLRRLYDSRSISLEGLLKVLSKASVGPKETSLPQ). Residue M91 is modified to Methionine amide. The segment at 92–116 (GKRNSQPDTPADVVEENTPSFGVLK) is disordered. A propeptide spanning residues 95-116 (NSQPDTPADVVEENTPSFGVLK) is cleaved from the precursor.

The protein belongs to the tachykinin family.

It localises to the secreted. In terms of biological role, tachykinins are active peptides which excite neurons, evoke behavioral responses, are potent vasodilators and secretagogues, and contract (directly or indirectly) many smooth muscles. Is a critical central regulator of gonadal function. The sequence is that of Tachykinin-3 (Tac3) from Rattus norvegicus (Rat).